The primary structure comprises 128 residues: Holin-like protein CidA (128 aa).

The next 3 helical transmembrane spans lie at 23 to 43 (LIVE…IVIF), 58 to 78 (IGAL…AVGI), and 84 to 104 (ILAE…FVVM).

The protein belongs to the CidA/LrgA family. CidA subfamily.

The protein resides in the cell membrane. Increases the activity of extracellular murein hydrolases possibly by mediating their export via hole formation. Inhibited by the antiholin-like proteins LrgAB. In an unstressed cell, the LrgAB products probably inhibit the function of the CidA protein. When a cell is stressed by the addition of antibiotics or by other factors in the environment, CidA possibly oligomerizes within the bacterial cell membrane, creating lesions that disrupt the proton motive force, which in turn results in loss of cell viability. These lesions are also hypothesized to regulate the subsequent cell lysis by either allowing the murein hydrolases access to the cell wall substrate and/or regulating their activity by a possible change in the cell wall pH that results from loss of membrane potential. The protein is Holin-like protein CidA of Bacillus licheniformis (strain ATCC 14580 / DSM 13 / JCM 2505 / CCUG 7422 / NBRC 12200 / NCIMB 9375 / NCTC 10341 / NRRL NRS-1264 / Gibson 46).